Consider the following 147-residue polypeptide: MKIVIQRVKEASVSIDGKIAGAIDQGLLLLVGIGPDDQAEDIDYAVRKISHMRIFSDPEGKMNRSIQDIEGSVLSISQFTLYADTKKGNRPAFTGAAKPDRASQLYNSFNAQLEQLVPVQRGVFGADMQVSLINDGPVTIILDTKYR.

The short motif at 136–137 (GP) is the Gly-cisPro motif, important for rejection of L-amino acids element.

This sequence belongs to the DTD family. In terms of assembly, homodimer.

It is found in the cytoplasm. The catalysed reaction is glycyl-tRNA(Ala) + H2O = tRNA(Ala) + glycine + H(+). It catalyses the reaction a D-aminoacyl-tRNA + H2O = a tRNA + a D-alpha-amino acid + H(+). In terms of biological role, an aminoacyl-tRNA editing enzyme that deacylates mischarged D-aminoacyl-tRNAs. Also deacylates mischarged glycyl-tRNA(Ala), protecting cells against glycine mischarging by AlaRS. Acts via tRNA-based rather than protein-based catalysis; rejects L-amino acids rather than detecting D-amino acids in the active site. By recycling D-aminoacyl-tRNA to D-amino acids and free tRNA molecules, this enzyme counteracts the toxicity associated with the formation of D-aminoacyl-tRNA entities in vivo and helps enforce protein L-homochirality. This chain is D-aminoacyl-tRNA deacylase, found in Streptococcus equi subsp. equi (strain 4047).